The sequence spans 140 residues: Gonadotropin subunit beta-2 (140 aa).

The N-terminal stretch at 1–24 (MSVYPECTWLLFVCLCHLLVSAGG) is a signal peptide. Disulfide bonds link Cys-30–Cys-78, Cys-44–Cys-93, Cys-47–Cys-131, Cys-55–Cys-109, Cys-59–Cys-111, and Cys-114–Cys-121. Asn-34 carries an N-linked (GlcNAc...) asparagine glycan.

The protein belongs to the glycoprotein hormones subunit beta family. In terms of assembly, heterodimer of an alpha and a beta chain.

Its subcellular location is the secreted. Functionally, involved in gametogenesis and steroidogenesis. This chain is Gonadotropin subunit beta-2 (cgbb), found in Anguilla anguilla (European freshwater eel).